Reading from the N-terminus, the 963-residue chain is Kinesin-1 heavy chain (963 aa).

Ala-2 is subject to N-acetylalanine. The 318-residue stretch at 8–325 (NIKVMCRFRP…LLFGQRAKTI (318 aa)) folds into the Kinesin motor domain. An ATP-binding site is contributed by 85–92 (GQTSSGKT). Lys-213 is covalently cross-linked (Glycyl lysine isopeptide (Lys-Gly) (interchain with G-Cter in SUMO2)). Residues 329–914 (VCVNVELTAE…AVRSKNMARR (586 aa)) are a coiled coil. Residues 908–963 (SKNMARRGHSAQIAKPIRPGQHPAASPTHPSAIRGGGAFVQNSQPVAVRGGGGKQV) are disordered. The segment at 915-963 (GHSAQIAKPIRPGQHPAASPTHPSAIRGGGAFVQNSQPVAVRGGGGKQV) is globular. Residue Ser-933 is modified to Phosphoserine. Residue Arg-956 is modified to Omega-N-methylarginine.

The protein belongs to the TRAFAC class myosin-kinesin ATPase superfamily. Kinesin family. Kinesin subfamily. Oligomer composed of two heavy chains and two light chains. Interacts with GRIP1 and PPP1R42. Interacts with SYBU. Interacts with JAKMIP1. Interacts with PLEKHM2. Interacts with ECPAS. Interacts with ZFYVE27. Found in a complex with OGT, RHOT1, RHOT2 and TRAK1. Interacts with APP (via cytoplasmic domain).

The protein resides in the cytoplasm. It localises to the cytoskeleton. The protein localises to the cytolytic granule membrane. It is found in the lysosome membrane. Microtubule-dependent motor required for normal distribution of mitochondria and lysosomes. Can induce formation of neurite-like membrane protrusions in non-neuronal cells in a ZFYVE27-dependent manner. Regulates centrosome and nuclear positioning during mitotic entry. During the G2 phase of the cell cycle in a BICD2-dependent manner, antagonizes dynein function and drives the separation of nuclei and centrosomes. Required for anterograde axonal transportation of MAPK8IP3/JIP3 which is essential for MAPK8IP3/JIP3 function in axon elongation. Through binding with PLEKHM2 and ARL8B, directs lysosome movement toward microtubule plus ends. Involved in NK cell-mediated cytotoxicity. Drives the polarization of cytolytic granules and microtubule-organizing centers (MTOCs) toward the immune synapse between effector NK lymphocytes and target cells. This is Kinesin-1 heavy chain from Homo sapiens (Human).